Consider the following 114-residue polypeptide: Cytokine SCM-1 beta (114 aa).

Residues 1 to 21 (MRLLILALLGICSLTAYIVEG) form the signal peptide. A disulfide bridge links cysteine 32 with cysteine 69. The interval 91-114 (RNNMIQTKPTGTQQSTNTAVTLTG) is disordered.

This sequence belongs to the intercrine gamma family.

It is found in the secreted. Functionally, chemotactic activity for lymphocytes but not for monocytes or neutrophils. The protein is Cytokine SCM-1 beta (XCL2) of Homo sapiens (Human).